The sequence spans 128 residues: Small ribosomal subunit protein uS12 (128 aa).

Residues 1–25 (MPTIQQLIRRGRKTKASKTASPALE) are disordered. D89 carries the post-translational modification 3-methylthioaspartic acid. The tract at residues 101–128 (SLDTSGVADRRNSRSKYGAKRPKEAAAK) is disordered.

It belongs to the universal ribosomal protein uS12 family. In terms of assembly, part of the 30S ribosomal subunit. Contacts proteins S8 and S17. May interact with IF1 in the 30S initiation complex.

Functionally, with S4 and S5 plays an important role in translational accuracy. In terms of biological role, interacts with and stabilizes bases of the 16S rRNA that are involved in tRNA selection in the A site and with the mRNA backbone. Located at the interface of the 30S and 50S subunits, it traverses the body of the 30S subunit contacting proteins on the other side and probably holding the rRNA structure together. The combined cluster of proteins S8, S12 and S17 appears to hold together the shoulder and platform of the 30S subunit. The sequence is that of Small ribosomal subunit protein uS12 from Chlorobium phaeobacteroides (strain BS1).